The chain runs to 280 residues: Fructose-1,6-bisphosphatase/inositol-1-monophosphatase (280 aa).

Residues Glu-73, Asp-94, Leu-96, and Asp-97 each contribute to the Mg(2+) site. Substrate contacts are provided by residues Asp-97–Thr-99, Arg-195, Val-200, and Arg-219. Asp-226 serves as a coordination point for Mg(2+).

Belongs to the inositol monophosphatase superfamily. FBPase class 4 family. Mg(2+) is required as a cofactor.

It catalyses the reaction beta-D-fructose 1,6-bisphosphate + H2O = beta-D-fructose 6-phosphate + phosphate. The enzyme catalyses a myo-inositol phosphate + H2O = myo-inositol + phosphate. In terms of biological role, phosphatase with broad specificity; it can dephosphorylate fructose 1,6-bisphosphate, and both D and L isomers of inositol-1-phosphate (I-1-P). The chain is Fructose-1,6-bisphosphatase/inositol-1-monophosphatase (suhB) from Methanothermobacter thermautotrophicus (strain ATCC 29096 / DSM 1053 / JCM 10044 / NBRC 100330 / Delta H) (Methanobacterium thermoautotrophicum).